Consider the following 480-residue polypeptide: UDP-glycosyltransferase 72B1 (480 aa).

His19 functions as the Proton acceptor in the catalytic mechanism. Asp117 acts as the Charge relay in catalysis. Residues Ser277, Trp346, Ala347, and His364 each contribute to the UDP site. Ser277, Trp346, Ala347, His364, Trp367, Asn368, Ser369, Glu372, Tyr386, Glu388, and Gln389 together coordinate UDP-alpha-D-glucose. Residues Asn368, Ser369, Glu372, and Tyr386 each coordinate UDP.

It belongs to the UDP-glycosyltransferase family.

It carries out the reaction hydroquinone + UDP-alpha-D-glucose = hydroquinone O-beta-D-glucopyranoside + UDP + H(+). In terms of biological role, bifunctional O-glycosyltransferase and N-glycosyltransferase that can detoxify xenobiotics. Possesses high activity to metabolize the persistent pollutants 2,4,5-trichlorophenol (TCP) and 3,4-dichloroaniline (DCA). Also active on benzoates and benzoate derivatives in vitro. This chain is UDP-glycosyltransferase 72B1 (UGT72B1), found in Arabidopsis thaliana (Mouse-ear cress).